A 548-amino-acid polypeptide reads, in one-letter code: Copine-2 (548 aa).

2 C2 domains span residues 6–131 (DGGA…TRPL) and 138–263 (PAGK…PLEI). Asp39, Asp45, Asp97, Asp99, Ser102, Asp109, Asp170, Asp176, Asp232, Asp234, and Asp240 together coordinate Ca(2+). A linker region region spans residues 247 to 304 (TSVLQMSEARDGVPLEIECINPKKQRKKKSYKNSGIIILRSCKIHRNYSFLDYILGGC). The 203-residue stretch at 305–507 (QLMFTVGIDF…AARDIVQFVP (203 aa)) folds into the VWFA domain.

It belongs to the copine family. The cofactor is Ca(2+).

Its subcellular location is the cytoplasm. It localises to the nucleus. The protein localises to the cell membrane. Calcium-dependent phospholipid-binding protein that plays a role in calcium-mediated intracellular processes. Exhibits calcium-dependent cell membrane binding properties. The chain is Copine-2 from Mus musculus (Mouse).